Here is a 177-residue protein sequence, read N- to C-terminus: UPF0251 protein Cag_0886 (177 aa).

The interval 147–177 (GGCLSDEESDEQENEQRTVGYPESEEELEIE) is disordered.

The protein belongs to the UPF0251 family.

This is UPF0251 protein Cag_0886 from Chlorobium chlorochromatii (strain CaD3).